The sequence spans 101 residues: NADH-quinone oxidoreductase subunit K (101 aa).

Helical transmembrane passes span 4 to 24 (LAHF…GIFL), 30 to 50 (IVLL…FVAF), and 61 to 81 (VFVF…LAIL).

It belongs to the complex I subunit 4L family. In terms of assembly, NDH-1 is composed of 14 different subunits. Subunits NuoA, H, J, K, L, M, N constitute the membrane sector of the complex.

Its subcellular location is the cell inner membrane. It carries out the reaction a quinone + NADH + 5 H(+)(in) = a quinol + NAD(+) + 4 H(+)(out). In terms of biological role, NDH-1 shuttles electrons from NADH, via FMN and iron-sulfur (Fe-S) centers, to quinones in the respiratory chain. The immediate electron acceptor for the enzyme in this species is believed to be ubiquinone. Couples the redox reaction to proton translocation (for every two electrons transferred, four hydrogen ions are translocated across the cytoplasmic membrane), and thus conserves the redox energy in a proton gradient. This chain is NADH-quinone oxidoreductase subunit K, found in Cupriavidus metallidurans (strain ATCC 43123 / DSM 2839 / NBRC 102507 / CH34) (Ralstonia metallidurans).